The primary structure comprises 259 residues: Protein unc-50 homolog (259 aa).

N-acetylmethionine is present on Met-1. Residues 1-17 (MLPSTSVNSPAQGNGVL) show a composition bias toward polar residues. Positions 1 to 22 (MLPSTSVNSPAQGNGVLSSRDA) are disordered. Over 1–82 (MLPSTSVNSP…TKDQWARDDP (82 aa)) the chain is Cytoplasmic. Phosphoserine is present on Ser-6. A helical transmembrane segment spans residues 83–103 (AFLVLLSIWLCVSTIGFGFVL). Topologically, residues 104 to 115 (DMGFFETIKLLL) are lumenal. Residues 116–136 (WVVFIDCVGVGLLISTLMWFI) traverse the membrane as a helical segment. The Cytoplasmic segment spans residues 137-163 (SNKYLVKRQSRDYDVEWGYAFDVHLNA). The chain crosses the membrane as a helical span at residues 164-184 (FYPLLVILHFIQLFFINHVIL). Residues 185–187 (TDT) lie on the Lumenal side of the membrane. A helical transmembrane segment spans residues 188-208 (FIGYLVGNTLWLVAVGYYIYV). Topologically, residues 209–222 (TFLGYSALPFLKNT) are cytoplasmic. A helical membrane pass occupies residues 223–243 (VILLYPFAPLILLYGLSLALG). At 244–259 (WNFTHTLCSFYKYRVK) the chain is on the lumenal side.

It belongs to the unc-50 family.

The protein resides in the nucleus inner membrane. Its subcellular location is the golgi apparatus membrane. Functionally, involved in the cell surface expression of neuronal nicotinic receptors. Binds RNA. This chain is Protein unc-50 homolog (UNC50), found in Bos taurus (Bovine).